The following is an 82-amino-acid chain: RNA-binding protein Hfq (82 aa).

One can recognise a Sm domain in the interval 11 to 72 (DTFLNAVRKS…ISTIAPSAPV (62 aa)).

The protein belongs to the Hfq family. In terms of assembly, homohexamer.

RNA chaperone that binds small regulatory RNA (sRNAs) and mRNAs to facilitate mRNA translational regulation in response to envelope stress, environmental stress and changes in metabolite concentrations. Also binds with high specificity to tRNAs. This chain is RNA-binding protein Hfq, found in Hyphomonas neptunium (strain ATCC 15444).